We begin with the raw amino-acid sequence, 237 residues long: Ribonuclease PH (237 aa).

Phosphate contacts are provided by residues Arg-86 and 124–126; that span reads GTR.

The protein belongs to the RNase PH family. In terms of assembly, homohexameric ring arranged as a trimer of dimers.

The catalysed reaction is tRNA(n+1) + phosphate = tRNA(n) + a ribonucleoside 5'-diphosphate. Functionally, phosphorolytic 3'-5' exoribonuclease that plays an important role in tRNA 3'-end maturation. Removes nucleotide residues following the 3'-CCA terminus of tRNAs; can also add nucleotides to the ends of RNA molecules by using nucleoside diphosphates as substrates, but this may not be physiologically important. Probably plays a role in initiation of 16S rRNA degradation (leading to ribosome degradation) during starvation. The chain is Ribonuclease PH from Alteromonas mediterranea (strain DSM 17117 / CIP 110805 / LMG 28347 / Deep ecotype).